The chain runs to 1050 residues: Self-sufficient cytochrome P450 monooxygenase CYP505E5 (1050 aa).

Cys405 contributes to the heme binding site. The disordered stretch occupies residues 467–491; that stretch reads RRSMLVARDGSSGESSNHLAEARGD. One can recognise a Flavodoxin-like domain in the interval 500–641; it reads VSFFYGSNSG…DLEAWEETSL (142 aa). FMN-binding positions include 506-510 and 585-617; these read SNSGT and VFGCGHHDWTQTFYRIPILIDDLMHKAGATRLA. Residues 679-907 form the FAD-binding FR-type domain; that stretch reads KGLIEAKVTA…RPAKESFHLP (229 aa).

In the N-terminal section; belongs to the cytochrome P450 family. The cofactor is FAD. FMN serves as cofactor. Heme is required as a cofactor.

The catalysed reaction is 2 oxidized [cytochrome P450] + NADPH = 2 reduced [cytochrome P450] + NADP(+) + H(+). The enzyme catalyses an organic molecule + reduced [NADPH--hemoprotein reductase] + O2 = an alcohol + oxidized [NADPH--hemoprotein reductase] + H2O + H(+). It carries out the reaction dodecanoate + reduced [NADPH--hemoprotein reductase] + O2 = 5-hydroxydodecanoate + oxidized [NADPH--hemoprotein reductase] + H2O + H(+). It catalyses the reaction tetradecanoate + reduced [NADPH--hemoprotein reductase] + O2 = 7-hydroxytetradecanoate + oxidized [NADPH--hemoprotein reductase] + H2O + H(+). The catalysed reaction is dodecan-1-ol + reduced [NADPH--hemoprotein reductase] + O2 = 1,5-dodecanediol + oxidized [NADPH--hemoprotein reductase] + H2O + H(+). The enzyme catalyses dodecan-1-ol + reduced [NADPH--hemoprotein reductase] + O2 = 1,4-dodecanediol + oxidized [NADPH--hemoprotein reductase] + H2O + H(+). It carries out the reaction dodecan-1-ol + reduced [NADPH--hemoprotein reductase] + O2 = 1,6-dodecanediol + oxidized [NADPH--hemoprotein reductase] + H2O + H(+). Its function is as follows. Self-sufficient cytochrome P450 monooxygenase that catalyzes the regioselective in-chain hydroxylation of alkanes, fatty alcohols, and fatty acids at the omega-7 position. Performs hydroxylation of C10-C16 n-alkanes and C12 and C14 fatty alcohols; and thereby enables the one step biocatalytic synthesis of rare alcohols such as 5-dodecanol and 7-tetradecanol. Converts 1-dodecanol into 1,5-dodecanediol as major product with very little sub-terminally hydroxylated products with the 1,4-dodecanediol and 1,6-dodecanediol more abundant. Converts dodecanoic acid to 5-hydroxydodecanoic acid which can be further converted into delta-dodecalactone by lactonization of the 5-hydroxy acid at low pH. Also gives sub-terminal hydroxylation of dodecanoic acid with 9-hydroxydodecanoic acid being the second most abundant product. The protein is Self-sufficient cytochrome P450 monooxygenase CYP505E5 of Aspergillus niger.